A 369-amino-acid chain; its full sequence is D-alanine--D-alanine ligase (369 aa).

Residues Lys-152 to Glu-359 enclose the ATP-grasp domain. Arg-180–Glu-235 lines the ATP pocket. Mg(2+) contacts are provided by Asp-314, Glu-326, and Asn-328.

The protein belongs to the D-alanine--D-alanine ligase family. It depends on Mg(2+) as a cofactor. Mn(2+) serves as cofactor.

Its subcellular location is the cytoplasm. The catalysed reaction is 2 D-alanine + ATP = D-alanyl-D-alanine + ADP + phosphate + H(+). It functions in the pathway cell wall biogenesis; peptidoglycan biosynthesis. Cell wall formation. In Mycobacterium avium (strain 104), this protein is D-alanine--D-alanine ligase.